Here is a 131-residue protein sequence, read N- to C-terminus: UPF0102 protein CYA_0708 (131 aa).

Belongs to the UPF0102 family.

The sequence is that of UPF0102 protein CYA_0708 from Synechococcus sp. (strain JA-3-3Ab) (Cyanobacteria bacterium Yellowstone A-Prime).